The sequence spans 666 residues: DNA ligase (666 aa).

Residues 34 to 38, 83 to 84, and glutamate 114 contribute to the NAD(+) site; these read DEEYD and SL. Catalysis depends on lysine 116, which acts as the N6-AMP-lysine intermediate. NAD(+) contacts are provided by arginine 137, glutamate 174, lysine 290, and lysine 314. Residues cysteine 408, cysteine 411, cysteine 424, and cysteine 429 each contribute to the Zn(2+) site. The BRCT domain maps to 584–666; sequence SIEGPLKGLT…LKMVKREHNG (83 aa).

The protein belongs to the NAD-dependent DNA ligase family. LigA subfamily. It depends on Mg(2+) as a cofactor. Mn(2+) is required as a cofactor.

It catalyses the reaction NAD(+) + (deoxyribonucleotide)n-3'-hydroxyl + 5'-phospho-(deoxyribonucleotide)m = (deoxyribonucleotide)n+m + AMP + beta-nicotinamide D-nucleotide.. Functionally, DNA ligase that catalyzes the formation of phosphodiester linkages between 5'-phosphoryl and 3'-hydroxyl groups in double-stranded DNA using NAD as a coenzyme and as the energy source for the reaction. It is essential for DNA replication and repair of damaged DNA. This is DNA ligase from Coprothermobacter proteolyticus (strain ATCC 35245 / DSM 5265 / OCM 4 / BT).